The sequence spans 77 residues: Antitoxin VapB2 (77 aa).

One can recognise a SpoVT-AbrB domain in the interval 4 to 46; sequence ASVFMTNRSQAVRLPAEVRFSEEIKKLSVRVSGSDRILSPLNQ.

The protein belongs to the VapB family. Probably forms a complex with cognate toxin VapC2.

Antitoxin component of a type II toxin-antitoxin (TA) system. Neutralizes the effect of cognate toxin VapC2 but not non-cognate toxin VapC2. In Haemophilus influenzae (strain 86-028NP), this protein is Antitoxin VapB2.